Here is a 1574-residue protein sequence, read N- to C-terminus: Pentafunctional AROM polypeptide (1574 aa).

A 3-dehydroquinate synthase region spans residues 1 to 384; sequence MSCSNNTEPT…HEPRATTVED (384 aa). NAD(+)-binding positions include 49–51, 85–88, 116–118, and Asp-121; these read DTN, EISK, and GGV. Arg-132 contributes to the 7-phospho-2-dehydro-3-deoxy-D-arabino-heptonate binding site. 141–142 provides a ligand contact to NAD(+); the sequence is TT. 2 residues coordinate 7-phospho-2-dehydro-3-deoxy-D-arabino-heptonate: Asp-148 and Lys-154. Lys-163 lines the NAD(+) pocket. Asn-164 serves as a coordination point for 7-phospho-2-dehydro-3-deoxy-D-arabino-heptonate. NAD(+) is bound by residues 181-184 and Asn-192; that span reads FLET. Residue Glu-196 coordinates Zn(2+). 7-phospho-2-dehydro-3-deoxy-D-arabino-heptonate contacts are provided by residues 196-199 and Lys-250; that span reads EVIK. Glu-260 (proton acceptor; for 3-dehydroquinate synthase activity) is an active-site residue. 7-phospho-2-dehydro-3-deoxy-D-arabino-heptonate-binding positions include 264–268 and His-271; that span reads RNLLN. His-271 provides a ligand contact to Zn(2+). The active-site Proton acceptor; for 3-dehydroquinate synthase activity is the His-275. 7-phospho-2-dehydro-3-deoxy-D-arabino-heptonate is bound by residues His-287 and Lys-356. Zn(2+) is bound at residue His-287. Residues 397–837 are EPSP synthase; that stretch reads ITPGVSTKLA…WDTLSQSFGL (441 aa). Residue Cys-819 is the For EPSP synthase activity of the active site. A shikimate kinase region spans residues 858–1052; that stretch reads TRSVFIVGMR…TAKEQSFFVS (195 aa). 865–872 is an ATP binding site; sequence GMRGAGKT. The interval 1053–1266 is 3-dehydroquinase; sequence LTVPSVDSAV…AAPGQLSAAE (214 aa). The active-site Proton acceptor; for 3-dehydroquinate dehydratase activity is the His-1169. The active-site Schiff-base intermediate with substrate; for 3-dehydroquinate dehydratase activity is Lys-1197. A shikimate dehydrogenase region spans residues 1279 to 1574; the sequence is AQSFHLFGKP…NGDEIPTSTD (296 aa).

It in the N-terminal section; belongs to the sugar phosphate cyclases superfamily. Dehydroquinate synthase family. The protein in the 2nd section; belongs to the EPSP synthase family. In the 3rd section; belongs to the shikimate kinase family. This sequence in the 4th section; belongs to the type-I 3-dehydroquinase family. It in the C-terminal section; belongs to the shikimate dehydrogenase family. Homodimer. It depends on Zn(2+) as a cofactor.

It is found in the cytoplasm. It carries out the reaction 7-phospho-2-dehydro-3-deoxy-D-arabino-heptonate = 3-dehydroquinate + phosphate. The catalysed reaction is 3-dehydroquinate = 3-dehydroshikimate + H2O. It catalyses the reaction shikimate + NADP(+) = 3-dehydroshikimate + NADPH + H(+). The enzyme catalyses shikimate + ATP = 3-phosphoshikimate + ADP + H(+). It carries out the reaction 3-phosphoshikimate + phosphoenolpyruvate = 5-O-(1-carboxyvinyl)-3-phosphoshikimate + phosphate. The protein operates within metabolic intermediate biosynthesis; chorismate biosynthesis; chorismate from D-erythrose 4-phosphate and phosphoenolpyruvate: step 2/7. It participates in metabolic intermediate biosynthesis; chorismate biosynthesis; chorismate from D-erythrose 4-phosphate and phosphoenolpyruvate: step 3/7. Its pathway is metabolic intermediate biosynthesis; chorismate biosynthesis; chorismate from D-erythrose 4-phosphate and phosphoenolpyruvate: step 4/7. It functions in the pathway metabolic intermediate biosynthesis; chorismate biosynthesis; chorismate from D-erythrose 4-phosphate and phosphoenolpyruvate: step 5/7. The protein operates within metabolic intermediate biosynthesis; chorismate biosynthesis; chorismate from D-erythrose 4-phosphate and phosphoenolpyruvate: step 6/7. In terms of biological role, the AROM polypeptide catalyzes 5 consecutive enzymatic reactions in prechorismate polyaromatic amino acid biosynthesis. The sequence is that of Pentafunctional AROM polypeptide from Verticillium alfalfae (strain VaMs.102 / ATCC MYA-4576 / FGSC 10136) (Verticillium wilt of alfalfa).